We begin with the raw amino-acid sequence, 160 residues long: SsrA-binding protein (160 aa).

This sequence belongs to the SmpB family.

Its subcellular location is the cytoplasm. Its function is as follows. Required for rescue of stalled ribosomes mediated by trans-translation. Binds to transfer-messenger RNA (tmRNA), required for stable association of tmRNA with ribosomes. tmRNA and SmpB together mimic tRNA shape, replacing the anticodon stem-loop with SmpB. tmRNA is encoded by the ssrA gene; the 2 termini fold to resemble tRNA(Ala) and it encodes a 'tag peptide', a short internal open reading frame. During trans-translation Ala-aminoacylated tmRNA acts like a tRNA, entering the A-site of stalled ribosomes, displacing the stalled mRNA. The ribosome then switches to translate the ORF on the tmRNA; the nascent peptide is terminated with the 'tag peptide' encoded by the tmRNA and targeted for degradation. The ribosome is freed to recommence translation, which seems to be the essential function of trans-translation. The chain is SsrA-binding protein from Escherichia coli O139:H28 (strain E24377A / ETEC).